Reading from the N-terminus, the 352-residue chain is C-C chemokine receptor type 5 (352 aa).

Residues 1–30 (MDYQVSSPIYDIDYYTSEPCQKINVKQIAA) lie on the Extracellular side of the membrane. Sulfotyrosine is present on Y3. 2 O-linked (GalNAc...) serine glycosylation sites follow: S6 and S7. 3 positions are modified to sulfotyrosine: Y10, Y14, and Y15. Intrachain disulfides connect C20/C269 and C101/C178. Residues 31–58 (RLLPPLYSLVFIFGFVGNMLVILILINC) form a helical membrane-spanning segment. The Cytoplasmic portion of the chain corresponds to 59 to 68 (KRLKSMTDIY). The helical transmembrane segment at 69-89 (LLNLAISDLFFLLTVPFWAHY) threads the bilayer. Residues 90-102 (AAAQWDFGNTMCQ) are Extracellular-facing. Residues 103-124 (LLTGLYFIGFFSGIFFIILLTI) traverse the membrane as a helical segment. Residues 125-141 (DRYLAIVHAVFALKART) are Cytoplasmic-facing. The helical transmembrane segment at 142 to 166 (VTFGVVTSVITWVVAVFASLPGIIF) threads the bilayer. Topologically, residues 167 to 198 (TRSQKEGLHYTCSSHFPYSQYQFWKNFQTLKI) are extracellular. Residues 199-218 (VILGLVLPLLVMVICYSGIL) form a helical membrane-spanning segment. Residues 219 to 235 (KTLLRCRNEKKRHRAVR) are Cytoplasmic-facing. The helical transmembrane segment at 236 to 260 (LIFTIMIVYFLFWAPYNIVLLLNTF) threads the bilayer. Topologically, residues 261-277 (QEFFGLNNCSSSNRLDQ) are extracellular. A helical transmembrane segment spans residues 278–301 (AMQVTETLGMTHCCINPIIYAFVG). At 302–352 (EKFRNYLLVFFQKHIAKRFCKCCSIFQQEAPERASSVYTRSTGEQEISVGL) the chain is on the cytoplasmic side. 3 S-palmitoyl cysteine lipidation sites follow: C321, C323, and C324. S336, S337, S342, and S349 each carry phosphoserine; by BARK1.

This sequence belongs to the G-protein coupled receptor 1 family. Interacts with PRAF2. Efficient ligand binding to CCL3/MIP-1alpha and CCL4/MIP-1beta requires sulfation, O-glycosylation and sialic acid modifications. Glycosylation on Ser-6 is required for efficient binding of CCL4. Interacts with GRK2. Interacts with ARRB1 and ARRB2. Interacts with CNIH4. Interacts with S100A4; this interaction stimulates T-lymphocyte chemotaxis. Sulfated on at least 2 of the N-terminal tyrosines. Sulfation is required for efficient binding of the chemokines, CCL3 and CCL4. In terms of processing, palmitoylation in the C-terminal is important for cell surface expression. Post-translationally, phosphorylation on serine residues in the C-terminal is stimulated by binding CC chemokines especially by APO-RANTES. O-glycosylated, but not N-glycosylated. Ser-6 appears to be the major site even if Ser-7 may be also O-glycosylated. Also sialylated glycans present which contribute to chemokine binding. Thr-16 and Ser-17 may also be glycosylated and, if so, with small moieties such as a T-antigen.

The protein localises to the cell membrane. Receptor for a number of inflammatory CC-chemokines including CCL3/MIP-1-alpha, CCL4/MIP-1-beta and RANTES and subsequently transduces a signal by increasing the intracellular calcium ion level. May play a role in the control of granulocytic lineage proliferation or differentiation. Participates in T-lymphocyte migration to the infection site by acting as a chemotactic receptor. This chain is C-C chemokine receptor type 5 (CCR5), found in Pan paniscus (Pygmy chimpanzee).